The following is a 666-amino-acid chain: Probable potassium transport system protein Kup (666 aa).

The next 12 membrane-spanning stretches (helical) occupy residues 16–36 (GFII…LYTM), 58–78 (ISLI…LIAL), 100–120 (PWLI…GALT), 141–161 (IYQN…VLFG), 165–185 (FGTG…FSFL), 221–241 (IFIL…YSDL), 253–273 (WPFV…WILA), 292–312 (LTVY…QALI), 343–363 (LYIP…VLYF), 373–393 (YGLA…YYLI), 399–419 (PFLA…FFWA), and 424–444 (FMHG…VMFI).

It belongs to the HAK/KUP transporter (TC 2.A.72) family.

It is found in the cell membrane. It carries out the reaction K(+)(in) + H(+)(in) = K(+)(out) + H(+)(out). Transport of potassium into the cell. Likely operates as a K(+):H(+) symporter. The polypeptide is Probable potassium transport system protein Kup (Streptococcus pyogenes serotype M18 (strain MGAS8232)).